The sequence spans 206 residues: N-(5'-phosphoribosyl)anthranilate isomerase (206 aa).

It belongs to the TrpF family.

The catalysed reaction is N-(5-phospho-beta-D-ribosyl)anthranilate = 1-(2-carboxyphenylamino)-1-deoxy-D-ribulose 5-phosphate. The protein operates within amino-acid biosynthesis; L-tryptophan biosynthesis; L-tryptophan from chorismate: step 3/5. This Rubrobacter xylanophilus (strain DSM 9941 / JCM 11954 / NBRC 16129 / PRD-1) protein is N-(5'-phosphoribosyl)anthranilate isomerase.